Consider the following 420-residue polypeptide: Vasopressin V1a receptor (420 aa).

The tract at residues 1–45 (MSFPRGSYDPAASNSSPRWPLSAEDANSSREAAGHQKGSDPSGDV) is disordered. Topologically, residues 1 to 54 (MSFPRGSYDPAASNSSPRWPLSAEDANSSREAAGHQKGSDPSGDVRNEELAKLE) are extracellular. The N-linked (GlcNAc...) asparagine glycan is linked to N27. Positions 32-45 (AAGHQKGSDPSGDV) are enriched in basic and acidic residues. Residues 55–75 (IAVLAVIFVVAVLGNSSVLLA) traverse the membrane as a helical segment. The Cytoplasmic segment spans residues 76–92 (LHRTPRKTSRMHLFIRH). Residues 93 to 113 (LSLADLAVAFFQVLPQLCWDI) traverse the membrane as a helical segment. Topologically, residues 114 to 125 (TYRFRGPDWLCR) are extracellular. A disulfide bond links C124 and C205. A helical transmembrane segment spans residues 126–146 (VVKHLQVFAMFASAYMLVVMT). The Cytoplasmic portion of the chain corresponds to 147 to 168 (ADRYIAVCHPLKTLQQPARRSR). A helical membrane pass occupies residues 169-189 (LMIAASWVLSFLLSTPQYFIF). The Extracellular portion of the chain corresponds to 190 to 225 (SMIEIEVNNGTKTQDCWATFIQPWGTRAYVTWMTSG). N198 carries N-linked (GlcNAc...) asparagine glycosylation. The helical transmembrane segment at 226–246 (VFVVPVVILGTCYGFICYHIW) threads the bilayer. Over 247–294 (RNVRGKTASRQSKGSGEDVAPFHKGLLVTPCVSSVKTISRAKIRTVKM) the chain is Cytoplasmic. A helical transmembrane segment spans residues 295-315 (TFVIVTAYILCWAPFFIVQMW). At 316–331 (SVWDDNFIWTDSENPS) the chain is on the extracellular side. A helical membrane pass occupies residues 332 to 352 (ITITALLASLNSCCNPWIYMF). The Cytoplasmic segment spans residues 353–420 (FSGHLLQDCV…RSIRFIPVST (68 aa)). Residues C367 and C368 are each lipidated (S-palmitoyl cysteine). The interval 379-411 (DSDNMSRRQTSYSNNRSPTNSTGTWKDSPKSSR) is disordered. Polar residues predominate over residues 385 to 403 (RRQTSYSNNRSPTNSTGTW). S406 bears the Phosphoserine mark.

The protein belongs to the G-protein coupled receptor 1 family. Vasopressin/oxytocin receptor subfamily.

Its subcellular location is the cell membrane. Its function is as follows. Receptor for arginine vasopressin. The activity of this receptor is mediated by G proteins which activate a phosphatidyl-inositol-calcium second messenger system. Involved in social memory formation. This Microtus montanus (Montane vole) protein is Vasopressin V1a receptor (Avpr1a).